The sequence spans 313 residues: 3'-5' exoribonuclease YhaM (313 aa).

Positions 22-90 form a DNA-binding region, OB; it reads SSVKGTASNG…QLKIRQIRQA (69 aa). Residues 163–279 form the HD domain; that stretch reads HVVSMLRLAK…LHQIDLMDAS (117 aa).

The protein belongs to the YhaM family.

In terms of biological role, shows a 3'-5' exoribonuclease activity. This chain is 3'-5' exoribonuclease YhaM, found in Listeria innocua serovar 6a (strain ATCC BAA-680 / CLIP 11262).